The primary structure comprises 333 residues: Cinnamoyl-CoA reductase 1 (333 aa).

Residues 13–19 (GAGGFIA), Arg-38, Lys-44, 64–65 (DL), 84–86 (TAS), Tyr-157, Lys-161, 184–187 (PVLV), and Ser-199 each bind NADP(+). Cysteines 150 and 158 form a disulfide. Lys-161 (proton donor) is an active-site residue.

The protein belongs to the NAD(P)-dependent epimerase/dehydratase family. Dihydroflavonol-4-reductase subfamily. Post-translationally, the formation of a reversible disulfide bond reduces activity by perturbing the positioning of nearby catalytic residues. As to expression, expressed in flowers, leaves and stems.

Its subcellular location is the cytoplasm. The catalysed reaction is (E)-coniferaldehyde + NADP(+) + CoA = (E)-feruloyl-CoA + NADPH + H(+). It catalyses the reaction (E)-4-coumaraldehyde + NADP(+) + CoA = (E)-4-coumaroyl-CoA + NADPH + H(+). It carries out the reaction (E)-sinapaldehyde + NADP(+) + CoA = (E)-sinapoyl-CoA + NADPH + H(+). The enzyme catalyses (E)-cinnamaldehyde + NADP(+) + CoA = (E)-cinnamoyl-CoA + NADPH + H(+). Its pathway is aromatic compound metabolism; phenylpropanoid biosynthesis. With respect to regulation, inhibited by sodium iodide-mediated oxidation. Its function is as follows. Involved in the latter stages of lignin biosynthesis. Catalyzes one of the last steps of monolignol biosynthesis, the conversion of cinnamoyl-CoAs into their corresponding cinnamaldehydes. Mediates the conversion of feruloyl CoA to coniferylaldehyde. Also active toward p-coumaroyl-CoA and sinapoyl-CoA. Involved in the production of floral volatile phenylpropanoids in flowers of fragrant cultivars (e.g. cv. Mitchell and cv. V26) from cinnamic acid, a common precursor with the anthocyanin biosynthesis pathway involved in flower pigmentation. This is Cinnamoyl-CoA reductase 1 from Petunia hybrida (Petunia).